Reading from the N-terminus, the 393-residue chain is Prokineticin receptor 1 (393 aa).

At 1–62 the chain is on the extracellular side; the sequence is METTVGTLGE…TNSRTFFAAK (62 aa). Asn11 carries an N-linked (GlcNAc...) asparagine glycan. The chain crosses the membrane as a helical span at residues 63-83; the sequence is IVIGMALVGIMLVCGIGNFIF. The Cytoplasmic segment spans residues 84-98; it reads ITALARYKKLRNLTN. The helical transmembrane segment at 99–119 threads the bilayer; that stretch reads LLIANLAISDFLVAIVCCPFE. Over 120–145 the chain is Extracellular; the sequence is MDYYVVRQLSWEHGHVLCASVNYLRT. A disulfide bridge connects residues Cys137 and Cys217. The chain crosses the membrane as a helical span at residues 146–166; that stretch reads VSLYVSTNALLAIAIDRYLAI. The Cytoplasmic segment spans residues 167 to 179; the sequence is VHPLRPRMKCQTA. Residues 180 to 200 traverse the membrane as a helical segment; the sequence is AGLIFLVWSVSILIAIPAAYF. The Extracellular portion of the chain corresponds to 201–232; sequence TTETVLVIVESQEKIFCGQIWPVDQQFYYRSY. Residues 233–253 form a helical membrane-spanning segment; that stretch reads FLLVFGLEFVGPVIAMTLCYA. The Cytoplasmic segment spans residues 254-282; that stretch reads RVSRELWFKAVPGFQTEQIRRRLRCRRRT. The chain crosses the membrane as a helical span at residues 283-303; that stretch reads VLGLVCVLSAYVLCWAPFYGF. At 304-322 the chain is on the extracellular side; it reads TIVRDFFPSVFVKEKHYLT. A helical membrane pass occupies residues 323–343; it reads AFYVVECIAMSNSMINTLCFV. Residues 344–393 are Cytoplasmic-facing; the sequence is TVRNNTSKYLKRILRLQWRASPSGSKASADLDLRTTGIPATEEVDCIRLK.

This sequence belongs to the G-protein coupled receptor 1 family. As to expression, widely expressed in peripheral tissues with the highest level in the spleen and moderate levels in the adipose tissues, thymus, lung, kidney, testis, uterus and small intestine.

The protein resides in the cell membrane. In terms of biological role, receptor for prokineticin 1. Exclusively coupled to the G(q) subclass of heteromeric G proteins. Activation leads to mobilization of calcium, stimulation of phosphoinositide turnover and activation of p44/p42 mitogen-activated protein kinase. May play a role during early pregnancy. This Rattus norvegicus (Rat) protein is Prokineticin receptor 1 (Prokr1).